The chain runs to 106 residues: Large ribosomal subunit protein uL23 (106 aa).

The protein belongs to the universal ribosomal protein uL23 family. Part of the 50S ribosomal subunit. Contacts protein L29, and trigger factor when it is bound to the ribosome.

In terms of biological role, one of the early assembly proteins it binds 23S rRNA. One of the proteins that surrounds the polypeptide exit tunnel on the outside of the ribosome. Forms the main docking site for trigger factor binding to the ribosome. In Acinetobacter baylyi (strain ATCC 33305 / BD413 / ADP1), this protein is Large ribosomal subunit protein uL23.